The following is a 297-amino-acid chain: Phosphatidylserine decarboxylase proenzyme (297 aa).

Active-site charge relay system; for autoendoproteolytic cleavage activity residues include Asp100, His157, and Ser263. Residue Ser263 is the Schiff-base intermediate with substrate; via pyruvic acid; for decarboxylase activity of the active site. Ser263 bears the Pyruvic acid (Ser); by autocatalysis mark.

Belongs to the phosphatidylserine decarboxylase family. PSD-B subfamily. Prokaryotic type I sub-subfamily. Heterodimer of a large membrane-associated beta subunit and a small pyruvoyl-containing alpha subunit. Pyruvate is required as a cofactor. Is synthesized initially as an inactive proenzyme. Formation of the active enzyme involves a self-maturation process in which the active site pyruvoyl group is generated from an internal serine residue via an autocatalytic post-translational modification. Two non-identical subunits are generated from the proenzyme in this reaction, and the pyruvate is formed at the N-terminus of the alpha chain, which is derived from the carboxyl end of the proenzyme. The autoendoproteolytic cleavage occurs by a canonical serine protease mechanism, in which the side chain hydroxyl group of the serine supplies its oxygen atom to form the C-terminus of the beta chain, while the remainder of the serine residue undergoes an oxidative deamination to produce ammonia and the pyruvoyl prosthetic group on the alpha chain. During this reaction, the Ser that is part of the protease active site of the proenzyme becomes the pyruvoyl prosthetic group, which constitutes an essential element of the active site of the mature decarboxylase.

Its subcellular location is the cell membrane. It catalyses the reaction a 1,2-diacyl-sn-glycero-3-phospho-L-serine + H(+) = a 1,2-diacyl-sn-glycero-3-phosphoethanolamine + CO2. Its pathway is phospholipid metabolism; phosphatidylethanolamine biosynthesis; phosphatidylethanolamine from CDP-diacylglycerol: step 2/2. Functionally, catalyzes the formation of phosphatidylethanolamine (PtdEtn) from phosphatidylserine (PtdSer). The protein is Phosphatidylserine decarboxylase proenzyme of Actinobacillus pleuropneumoniae serotype 5b (strain L20).